The primary structure comprises 1043 residues: Polycomb protein Pcl (1043 aa).

Disordered regions lie at residues 1-34 (MMNNHFHLQHDHPPQNVAHPFMQQPSTAVPSAPP), 271-302 (PDSTTTTPQTPPTTPEAMSSPGKSSPSPPLLA), 317-346 (FKTVEAAPPTPPTPPSPPPPPPAPPVAAPS), and 395-422 (KLRKLGGGSSITAGGGGASTTESTNTSP). The segment covering 25–34 (PSTAVPSAPP) has biased composition (low complexity). Residues 324–344 (PPTPPTPPSPPPPPPAPPVAA) show a composition bias toward pro residues. One can recognise a Tudor domain in the interval 349–404 (VTYALQEDVFIKCNDGRFYLGTIIDQTSDQYLIRFDDQSEQWCEPDKLRKLGGGSS). Gly residues predominate over residues 399 to 412 (LGGGSSITAGGGGA). PHD-type zinc fingers lie at residues 424 to 472 (GPMC…CAKP) and 512 to 560 (QIYC…VFCC). Over residues 737–757 (AKKQAAQKADKHDELPLKPDL) the composition is skewed to basic and acidic residues. Disordered stretches follow at residues 737-819 (AKKQ…TSSL) and 931-985 (AKDL…PGHS). Over residues 783–792 (SRKRKAFRLS) the composition is skewed to basic residues. Positions 793 to 804 (KRYDNSRNHCDL) are enriched in basic and acidic residues. Residues serine 805 and serine 806 each carry the phosphoserine modification. The segment covering 807 to 819 (DENSSSSRGTSSL) has biased composition (low complexity). Residues 945-954 (THGRLLRQRP) show a composition bias toward basic residues. The segment covering 955–977 (QKQSPSQSRRNSTSSTATSSSSN) has biased composition (low complexity).

It belongs to the Polycomblike family. Component of a form of the Esc/E(z) complex present specifically during early embryogenesis which is composed of Caf1-55, esc, E(z), Su(z)12, Pcl and HDAC1/Rpd3. This complex is distinct from the PRC1 complex, which contains many other PcG proteins like Pc, Ph, Psc, Su(z)2. The two complexes however cooperate and interact together during the first 3 hours of development to establish PcG silencing. Interacts with corto in vitro.

The protein resides in the nucleus. It is found in the chromosome. Functionally, polycomb group (PcG) protein. While PcG proteins are generally required to maintain the transcriptionally repressive state of homeotic genes throughout development, this protein is specifically required during the first 6 hours of embryogenesis to establish the repressed state. Component of the Esc/E(z) complex, which methylates 'Lys-9' and 'Lys-27' residues of histone H3, leading to transcriptional repression of the affected target gene. The Esc/E(z) complex is necessary but not sufficient for the repression of homeotic target genes, suggesting that the recruitment of the distinct PRC1 complex is also required. Required for the correct spatial expression of the homeotic genes of the Antennapedia and Bithorax complexes. The polypeptide is Polycomb protein Pcl (Pcl) (Drosophila melanogaster (Fruit fly)).